We begin with the raw amino-acid sequence, 164 residues long: Ribosome maturation factor RimP (164 aa).

It belongs to the RimP family.

It is found in the cytoplasm. Its function is as follows. Required for maturation of 30S ribosomal subunits. This chain is Ribosome maturation factor RimP, found in Mycoplasma mycoides subsp. mycoides SC (strain CCUG 32753 / NCTC 10114 / PG1).